We begin with the raw amino-acid sequence, 291 residues long: Ribosomal RNA small subunit methyltransferase I (291 aa).

Belongs to the methyltransferase superfamily. RsmI family.

It is found in the cytoplasm. It catalyses the reaction cytidine(1402) in 16S rRNA + S-adenosyl-L-methionine = 2'-O-methylcytidine(1402) in 16S rRNA + S-adenosyl-L-homocysteine + H(+). Functionally, catalyzes the 2'-O-methylation of the ribose of cytidine 1402 (C1402) in 16S rRNA. The chain is Ribosomal RNA small subunit methyltransferase I from Neisseria meningitidis serogroup B (strain ATCC BAA-335 / MC58).